We begin with the raw amino-acid sequence, 122 residues long: Small ribosomal subunit protein uS13 (122 aa).

Positions 96–122 are disordered; that stretch reads LPVHGQRTKTNARTRKGPARTVAGKKK.

Belongs to the universal ribosomal protein uS13 family. As to quaternary structure, part of the 30S ribosomal subunit. Forms a loose heterodimer with protein S19. Forms two bridges to the 50S subunit in the 70S ribosome.

Functionally, located at the top of the head of the 30S subunit, it contacts several helices of the 16S rRNA. In the 70S ribosome it contacts the 23S rRNA (bridge B1a) and protein L5 of the 50S subunit (bridge B1b), connecting the 2 subunits; these bridges are implicated in subunit movement. Contacts the tRNAs in the A and P-sites. The sequence is that of Small ribosomal subunit protein uS13 from Geotalea daltonii (strain DSM 22248 / JCM 15807 / FRC-32) (Geobacter daltonii).